The primary structure comprises 274 residues: MPELPEVETVRRGLNRLVSGATIASIEVFWPKIINNDVDSFKQRLANQTIQTIDRRGKYLLFRFSNGLTMVSHLRMEGKYNVVPRGEDQGKHTHVIFHLTDDRDLLYNDTRKFGRMTLVPTGEENTVAGLRTIGPEPVAEQLTLAYMTATFGKSKKMIKPLLLDQSKIAGIGNIYADETLWMSKIHPMRPANSLTTDEIATLRQNIIDEMAMAIKGHGTTVHSFSTAFGEAGQFQNHLHVYGREGEPCERCGTIIEKIKVAQRGTHFCPLEQRL.

The Schiff-base intermediate with DNA role is filled by P2. The active-site Proton donor is E3. K58 functions as the Proton donor; for beta-elimination activity in the catalytic mechanism. DNA-binding residues include H92 and R111. An FPG-type; degenerate zinc finger spans residues 239 to 273 (HVYGREGEPCERCGTIIEKIKVAQRGTHFCPLEQR). Residue R263 is the Proton donor; for delta-elimination activity of the active site.

Belongs to the FPG family. Monomer. Requires Zn(2+) as cofactor.

The catalysed reaction is Hydrolysis of DNA containing ring-opened 7-methylguanine residues, releasing 2,6-diamino-4-hydroxy-5-(N-methyl)formamidopyrimidine.. It carries out the reaction 2'-deoxyribonucleotide-(2'-deoxyribose 5'-phosphate)-2'-deoxyribonucleotide-DNA = a 3'-end 2'-deoxyribonucleotide-(2,3-dehydro-2,3-deoxyribose 5'-phosphate)-DNA + a 5'-end 5'-phospho-2'-deoxyribonucleoside-DNA + H(+). Its function is as follows. Involved in base excision repair of DNA damaged by oxidation or by mutagenic agents. Acts as a DNA glycosylase that recognizes and removes damaged bases. Has a preference for oxidized purines, such as 7,8-dihydro-8-oxoguanine (8-oxoG). Has AP (apurinic/apyrimidinic) lyase activity and introduces nicks in the DNA strand. Cleaves the DNA backbone by beta-delta elimination to generate a single-strand break at the site of the removed base with both 3'- and 5'-phosphates. In Lactiplantibacillus plantarum (strain ATCC BAA-793 / NCIMB 8826 / WCFS1) (Lactobacillus plantarum), this protein is Formamidopyrimidine-DNA glycosylase.